Here is an 888-residue protein sequence, read N- to C-terminus: Valine--tRNA ligase (888 aa).

Residues 43–53 carry the 'HIGH' region motif; sequence PFTSGTLHLGH. Residues 534–538 carry the 'KMSKS' region motif; the sequence is KMSKS. An ATP-binding site is contributed by Lys537.

Belongs to the class-I aminoacyl-tRNA synthetase family. ValS type 2 subfamily.

The protein resides in the cytoplasm. It catalyses the reaction tRNA(Val) + L-valine + ATP = L-valyl-tRNA(Val) + AMP + diphosphate. In terms of biological role, catalyzes the attachment of valine to tRNA(Val). As ValRS can inadvertently accommodate and process structurally similar amino acids such as threonine, to avoid such errors, it has a 'posttransfer' editing activity that hydrolyzes mischarged Thr-tRNA(Val) in a tRNA-dependent manner. The sequence is that of Valine--tRNA ligase from Thermococcus kodakarensis (strain ATCC BAA-918 / JCM 12380 / KOD1) (Pyrococcus kodakaraensis (strain KOD1)).